The primary structure comprises 529 residues: Potassium voltage-gated channel subfamily A member 6 (529 aa).

The disordered stretch occupies residues 1 to 35; sequence MRSEKSLTLAAPGEVRGPEGEQQDAGEFQEAEGGG. The Cytoplasmic portion of the chain corresponds to 1-171; it reads MRSEKSLTLA…LLFEYPESSG (171 aa). Ser3 is subject to Phosphoserine. A compositionally biased stretch (acidic residues) spans 21-30; sequence EQQDAGEFQE. A helical membrane pass occupies residues 172–193; sequence PARGIAIVSVLVILISIVIFCL. Over 194–262 the chain is Extracellular; the sequence is ETLPQFRADG…TLGGSFFTDP (69 aa). Residues 203–238 form a disordered region; that stretch reads GRGGSNEGSGTRLSPASRSHEEEDEDEDSYAFPGSI. A compositionally biased stretch (polar residues) spans 210–219; the sequence is GSGTRLSPAS. Residues 263–284 traverse the membrane as a helical segment; the sequence is FFLVETLCIVWFTFELLVRFSA. A lipid anchor (S-palmitoyl cysteine) is attached at Cys285. Over 285–295 the chain is Cytoplasmic; it reads CPSKAAFFRNI. The chain crosses the membrane as a helical span at residues 296–316; the sequence is MNIIDLVAIFPYFITLGTELV. The Extracellular segment spans residues 317-337; sequence QRHEQQSVSGGSGQNGQQAMS. Residues 338-358 form a helical; Voltage-sensor membrane-spanning segment; that stretch reads LAILRVIRLVRVFRIFKLSRH. Residues 359–373 lie on the Cytoplasmic side of the membrane; sequence SKGLQILGKTLQASM. The tract at residues 360 to 373 is S4-S5 linker; the sequence is KGLQILGKTLQASM. Residues 374–395 form a helical membrane-spanning segment; sequence RELGLLIFFLFIGVILFSSAVY. Topologically, residues 396-409 are extracellular; that stretch reads FAEADDVDSLFPSI. The helical intramembrane region spans 410–421; that stretch reads PDAFWWAVVTMT. Positions 422–427 match the Selectivity filter motif; it reads TVGYGD. An intramembrane segment occupies 422–429; it reads TVGYGDMY. At 430–436 the chain is on the extracellular side; sequence PMTVGGK. Residues 437-465 traverse the membrane as a helical segment; the sequence is IVGSLCAIAGVLTIALPVPVIVSNFNYFY. The Cytoplasmic segment spans residues 466–529; sequence HRETEQEEQG…YAEKRMLTEV (64 aa). Residues 488-513 are disordered; that stretch reads DLKATDNGLGKPDFAEASRERRPSYL. The span at 500-510 shows a compositional bias: basic and acidic residues; that stretch reads DFAEASRERRP. Ser511 is subject to Phosphoserine; by PKA. A PDZ-binding motif is present at residues 527–529; sequence TEV.

This sequence belongs to the potassium channel family. A (Shaker) (TC 1.A.1.2) subfamily. Kv1.6/KCNA6 sub-subfamily. As to quaternary structure, homotetramer and heterotetramer of potassium channel proteins. Interacts with KCNAB1 and KCNAB2.

It is found in the cell membrane. It carries out the reaction K(+)(in) = K(+)(out). Functionally, voltage-gated potassium channel that mediates transmembrane potassium transport in excitable membranes. Forms tetrameric potassium-selective channels through which potassium ions pass in accordance with their electrochemical gradient. The channel alternates between opened and closed conformations in response to the voltage difference across the membrane. Can form functional homotetrameric channels and heterotetrameric channels that contain variable proportions of KCNA1, KCNA2, KCNA4, KCNA6, and possibly other family members as well; channel properties depend on the type of alpha subunits that are part of the channel. Channel properties are modulated by cytoplasmic beta subunits that regulate the subcellular location of the alpha subunits and promote rapid inactivation. Homotetrameric channels display rapid activation and slow inactivation. The protein is Potassium voltage-gated channel subfamily A member 6 (Kcna6) of Mus musculus (Mouse).